The sequence spans 259 residues: Bisphosphoglycerate mutase (259 aa).

S2 carries the post-translational modification N-acetylserine. Substrate-binding positions include 10 to 17 (RHGEGAWN), 23 to 24 (CS), R62, 89 to 92 (ERHY), R100, and 116 to 117 (RR). H11 acts as the Tele-phosphohistidine intermediate in catalysis. E89 (proton donor/acceptor) is an active-site residue. The residue at position 122 (T122) is a Phosphothreonine. 189–190 (GN) serves as a coordination point for substrate.

Belongs to the phosphoglycerate mutase family. BPG-dependent PGAM subfamily. In terms of assembly, homodimer. In terms of tissue distribution, expressed in red blood cells.

The enzyme catalyses (2R)-3-phospho-glyceroyl phosphate = (2R)-2,3-bisphosphoglycerate + H(+). It carries out the reaction (2R)-2-phosphoglycerate = (2R)-3-phosphoglycerate. At alkaline pH BPGM favors the synthase reaction; however, at lower pH the phosphatase reaction is dominant. Inhibited by citrate. Plays a major role in regulating hemoglobin oxygen affinity by controlling the levels of its allosteric effector 2,3-bisphosphoglycerate (2,3-BPG). Also exhibits mutase (EC 5.4.2.11) activity. This Oryctolagus cuniculus (Rabbit) protein is Bisphosphoglycerate mutase (BPGM).